The sequence spans 149 residues: Deoxyuridine 5'-triphosphate nucleotidohydrolase (149 aa).

Residues 68-70, Asn-81, 85-87, and Met-95 contribute to the substrate site; these read RSG and LID.

It belongs to the dUTPase family. Mg(2+) is required as a cofactor.

It catalyses the reaction dUTP + H2O = dUMP + diphosphate + H(+). Its pathway is pyrimidine metabolism; dUMP biosynthesis; dUMP from dCTP (dUTP route): step 2/2. Its function is as follows. This enzyme is involved in nucleotide metabolism: it produces dUMP, the immediate precursor of thymidine nucleotides and it decreases the intracellular concentration of dUTP so that uracil cannot be incorporated into DNA. This Bordetella pertussis (strain Tohama I / ATCC BAA-589 / NCTC 13251) protein is Deoxyuridine 5'-triphosphate nucleotidohydrolase.